Here is a 481-residue protein sequence, read N- to C-terminus: Guanine nucleotide exchange factor C9orf72 homolog (481 aa).

Residues 23-194 enclose the uDENN C9ORF72-type domain; that stretch reads SPLLAATFAY…ELLASMKSHS (172 aa). The cDENN C9ORF72-type domain maps to 200-343; the sequence is DIADTVLNDD…SELTAFWRAT (144 aa). A dDENN C9ORF72-type domain is found at 370 to 464; that stretch reads VLHRDTLVKA…IKPGLHSFIF (95 aa). The required for the homodimerization of the C9orf72-SMCR8 complex stretch occupies residues 461–481; the sequence is SFIFGRPFYTSVQERDVLMTF.

In terms of assembly, component of the C9orf72-SMCR8 complex, at least composed of C9orf72, SMCR8 and WDR41. The complex is formed of two protomers, each individually consisting of one molecule each of C9orf72, SMCR8 and WDR41. The protomers homodimerize via an interaction between C9orf72 (via C-terminus) and SMCR8 (via N-terminus). Within each protomer SMCR8 (via DENN domain) acts as a bridging protein between WDR41 (via C-terminus and N-terminus) and C9orf72 (via C-terminus). The C9orf72-SMCR8 complex associates with the ULK1/ATG1 kinase complex. Interacts with ULK1/ATG1 kinase complex members ULK1, ATG13 and RB1CC1. Interacts with SMCR8; the interaction is direct. Interacts with HNRNPA1, HNRNPA2B1 and UBQLN2. Interacts with small Rab GTPase RAB1A; the interaction mediates recruitment of RAB1A to the ULK1/ATG1 kinase complex. Also interacts with small Rab GTPase RAB7A. Interacts with cofilin. Interacts with GTP-binding proteins ARF1 and ARF6. Interacts with the DLG4/PSD-95. Interacts with CARM1 (via PH domain-like fold). Interacts with RAB39A and RAB39B (in GDP-bound forms); functions as GEF for RAB39A and RAB39B. As to expression, expressed in postnatal cerebellum and cortex (at protein level). Neuronal expression is detected in several regions of the adult brain and spinal cord. Prominent expression also observed in embryonic and early postnatal neurons including retinal ganglion cells, sensory neurons in the olfactory epithelium and in dorsal root ganglia, and spinal motor neurons. Expressed in the developing cerebral cortex, cerebellum, olfactory bulb, hippocampus and spinal cord in the embryo and in P0 cortical neurons and astrocytes. Also expressed in non-neuronal tissues such as kidney and tooth. In the spleen, highly expressed in myeloid cells compared to B cell and T cell populations where expression is much lower. In the brain, highly expressed in microglia. In terms of tissue distribution, expressed in the forebrain, including in the glomerular layer of the olfactory bulb (at protein level).

It is found in the nucleus. The protein resides in the cytoplasm. The protein localises to the P-body. Its subcellular location is the stress granule. It localises to the endosome. It is found in the lysosome. The protein resides in the cytoplasmic vesicle. The protein localises to the autophagosome. Its subcellular location is the autolysosome. It localises to the secreted. It is found in the cell projection. The protein resides in the axon. The protein localises to the growth cone. Its subcellular location is the perikaryon. It localises to the dendrite. It is found in the presynapse. The protein resides in the postsynapse. In terms of biological role, acts as a guanine-nucleotide releasing factor (GEF) for Rab GTPases by promoting the conversion of inactive RAB-GDP to the active form RAB-GTP. Acts as a GEF for RAB39A which enables HOPS-mediated autophagosome-lysosome membrane tethering and fusion in mammalian autophagy. Component of the C9orf72-SMCR8 complex where both subunits display GEF activity and that regulates autophagy. As part of the C9orf72-SMCR8-WDR41 (CSW) complex, functions as GEF for RAB8A, and RAB39B, thereby promoting autophagosome maturation. As part of the C9orf72-SMCR8 complex, also functions as GTPase activating protein (GAP) for RAB8A and RAB11A in vitro. The C9orf72-SMCR8 complex also acts as a regulator of autophagy initiation by interacting with the ULK1/ATG1 kinase complex and modulating its protein kinase activity. Promotes initiation of autophagy by regulating the RAB1A-dependent trafficking of the ULK1/ATG1 kinase complex to the phagophore which leads to autophagosome formation. Acts as a regulator of mTORC1 signaling by promoting phosphorylation of mTORC1 substrates. Plays a role in endosomal trafficking. May be involved in regulating the maturation of phagosomes to lysosomes. Promotes the lysosomal localization and lysosome-mediated degradation of CARM1 which leads to inhibition of starvation-induced lipid metabolism. Regulates actin dynamics in motor neurons by inhibiting the GTP-binding activity of ARF6, leading to ARF6 inactivation. This reduces the activity of the LIMK1 and LIMK2 kinases which are responsible for phosphorylation and inactivation of CFL1/cofilin, leading to cofilin activation. Positively regulates axon extension and axon growth cone size in spinal motor neurons. Required for SMCR8 protein expression and localization at pre- and post-synaptic compartments in the forebrain, also regulates protein abundance of RAB3A and GRIA1/GLUR1 in post-synaptic compartments in the forebrain and hippocampus. Plays a role within the hematopoietic system in restricting inflammation and the development of autoimmunity. The sequence is that of Guanine nucleotide exchange factor C9orf72 homolog from Mus musculus (Mouse).